The sequence spans 113 residues: U11-theraphotoxin-Hhn1a (113 aa).

Residues 1 to 21 (MNTVRVTFLLVFVLAVSLGQA) form the signal peptide. Positions 22–74 (DKDENRMEMQEKTEQGNSYLDFAENLPLQKLEELEAKLLEEDSEESRNSRQKR) are excised as a propeptide. Residues 60-69 (LEEDSEESRN) are compositionally biased toward basic and acidic residues. The segment at 60–83 (LEEDSEESRNSRQKRCIGEGVPCD) is disordered. Cystine bridges form between cysteine 75-cysteine 90, cysteine 82-cysteine 95, and cysteine 89-cysteine 110.

Belongs to the neurotoxin 14 (magi-1) family. 01 (HNTX-16) subfamily. Expressed by the venom gland.

It is found in the secreted. Its function is as follows. Probable ion channel inhibitor. This Cyriopagopus hainanus (Chinese bird spider) protein is U11-theraphotoxin-Hhn1a.